Reading from the N-terminus, the 183-residue chain is Apo-citrate lyase phosphoribosyl-dephospho-CoA transferase (183 aa).

The protein belongs to the CitX family.

The catalysed reaction is apo-[citrate lyase ACP] + 2'-(5''-triphospho-alpha-D-ribosyl)-3'-dephospho-CoA = holo-[citrate lyase ACP] + diphosphate. Functionally, transfers 2-(5''-triphosphoribosyl)-3'-dephosphocoenzyme-A on a serine residue to the apo-acyl carrier protein (gamma chain) of the citrate lyase to yield holo-acyl carrier protein. The protein is Apo-citrate lyase phosphoribosyl-dephospho-CoA transferase of Escherichia coli O139:H28 (strain E24377A / ETEC).